A 396-amino-acid chain; its full sequence is Elongation factor Tu (396 aa).

One can recognise a tr-type G domain in the interval 10–205 (KPHVNIGTIG…AVDESIPDPV (196 aa)). Positions 19-26 (GHVDHGKT) are G1. 19–26 (GHVDHGKT) provides a ligand contact to GTP. Thr26 contributes to the Mg(2+) binding site. A G2 region spans residues 62–66 (GITIN). Positions 83–86 (DAPG) are G3. GTP is bound by residues 83-87 (DAPGH) and 138-141 (NKSD). Residues 138–141 (NKSD) are G4. Positions 175-177 (SAL) are G5.

Belongs to the TRAFAC class translation factor GTPase superfamily. Classic translation factor GTPase family. EF-Tu/EF-1A subfamily. In terms of assembly, monomer.

Its subcellular location is the cytoplasm. It catalyses the reaction GTP + H2O = GDP + phosphate + H(+). GTP hydrolase that promotes the GTP-dependent binding of aminoacyl-tRNA to the A-site of ribosomes during protein biosynthesis. This is Elongation factor Tu from Mycobacterium marinum (strain ATCC BAA-535 / M).